Here is a 147-residue protein sequence, read N- to C-terminus: UPF0275 protein PM0504 (147 aa).

Belongs to the UPF0275 family.

The polypeptide is UPF0275 protein PM0504 (Pasteurella multocida (strain Pm70)).